The primary structure comprises 536 residues: T-complex protein 1 subunit delta (536 aa).

A disordered region spans residues 1–21; sequence MAAVAAPMASKPRGSKAESFV.

It belongs to the TCP-1 chaperonin family. In terms of assembly, heterooligomeric complex of about 850 to 900 kDa that forms two stacked rings, 12 to 16 nm in diameter.

It localises to the cytoplasm. Molecular chaperone; assists the folding of proteins upon ATP hydrolysis. Known to play a role, in vitro, in the folding of actin and tubulin. The chain is T-complex protein 1 subunit delta from Arabidopsis thaliana (Mouse-ear cress).